The sequence spans 291 residues: MFQGAMVAIVTPFKAGQVDEETFRNLIEFQIANGTHGIVPCGTTGESATLSFNEHERVIEIAVEQVDKRVPVIAGTGSNNTEEAIRLTKHAKNAGADGALLISPYYNKPTQEGLYRHYEKIAKAVDIPLVPYNIPGRTAVNMEPDTIARLAKIDNIVAIKEAAGSMKQITDIIARCGDELVVLSGEDFLTFPLLCVGGKGVISVVSNIAPADMANLCNLFLGGDFDAARKLYYRLLPLCHGLFYETNPAPVKAALAMMNKIPSDELRLPLAPMSPANRLRLRQDLQAYGLI.

Position 44 (Thr-44) interacts with pyruvate. The Proton donor/acceptor role is filled by Tyr-132. The active-site Schiff-base intermediate with substrate is Lys-160. Ile-202 lines the pyruvate pocket.

This sequence belongs to the DapA family. Homotetramer; dimer of dimers.

It is found in the cytoplasm. The catalysed reaction is L-aspartate 4-semialdehyde + pyruvate = (2S,4S)-4-hydroxy-2,3,4,5-tetrahydrodipicolinate + H2O + H(+). The protein operates within amino-acid biosynthesis; L-lysine biosynthesis via DAP pathway; (S)-tetrahydrodipicolinate from L-aspartate: step 3/4. Catalyzes the condensation of (S)-aspartate-beta-semialdehyde [(S)-ASA] and pyruvate to 4-hydroxy-tetrahydrodipicolinate (HTPA). The polypeptide is 4-hydroxy-tetrahydrodipicolinate synthase (Syntrophobacter fumaroxidans (strain DSM 10017 / MPOB)).